A 62-amino-acid chain; its full sequence is uncharacterized protein (62 aa).

This is an uncharacterized protein from Caenorhabditis elegans.